A 310-amino-acid chain; its full sequence is GPN-loop GTPase 2 (310 aa).

A2 carries the N-acetylalanine modification. A GTP-binding site is contributed by 19–24; the sequence is GSGKTT. Positions 76 to 78 match the Gly-Pro-Asn (GPN)-loop; involved in dimer interface motif; that stretch reads GPN. GTP is bound at residue 178–181; that stretch reads SKMD.

Belongs to the GPN-loop GTPase family. In terms of assembly, heterodimers with GPN1 or GPN3. Binds to RNA polymerase II (RNAPII).

Small GTPase required for proper localization of RNA polymerase II and III (RNAPII and RNAPIII). May act at an RNAP assembly step prior to nuclear import. This Bos taurus (Bovine) protein is GPN-loop GTPase 2 (GPN2).